The chain runs to 440 residues: Trigger factor (440 aa).

In terms of domain architecture, PPIase FKBP-type spans 161–257 (GDYVKLAYEG…VLEVRERVLP (97 aa)).

It belongs to the FKBP-type PPIase family. Tig subfamily.

The protein resides in the cytoplasm. The catalysed reaction is [protein]-peptidylproline (omega=180) = [protein]-peptidylproline (omega=0). Its function is as follows. Involved in protein export. Acts as a chaperone by maintaining the newly synthesized protein in an open conformation. Functions as a peptidyl-prolyl cis-trans isomerase. In Opitutus terrae (strain DSM 11246 / JCM 15787 / PB90-1), this protein is Trigger factor.